The sequence spans 198 residues: MAQKPKVDPHVGRLGYLQALVTEFQETQSQDAKEQVLANLANFAYDPSNYEYLRQLQVLDLFLDSLSEENETLVEFAIGGLCNLCPDRANKEHILHAGGVPLIINCLSSPNEETVLSAITTLMHLSPPGRSFLPELTATPVVQCMLRFSLSASARLRNLAQIFLEDFCSPRQVAEARSRQAHSALGIPLPRSVAPRQR.

ARM repeat units lie at residues 57–99 (QVLD…HAGG) and 100–140 (VPLI…TATP). S169 is subject to Phosphoserine.

Component of the minor spliceosome. Within this complex, interacts with RBM48.

In terms of biological role, as a component of the minor spliceosome, involved in the splicing of U12-type introns in pre-mRNAs. This is Armadillo repeat-containing protein 7 (ARMC7) from Homo sapiens (Human).